Here is a 244-residue protein sequence, read N- to C-terminus: Mitophagy receptor atg43 (244 aa).

A disordered region spans residues 1–24 (MSSESKGIPIPRSDSNKTSDVSSW). The Cytoplasmic segment spans residues 1-198 (MSSESKGIPI…LVALITLRDH (198 aa)). The atg8 interacting motif (AIM) motif lies at 28–31 (YELI). A disordered region spans residues 105–131 (SLSLLQSKEEDDSSNWETEDSESAVEE). Over residues 113 to 131 (EEDDSSNWETEDSESAVEE) the composition is skewed to acidic residues. Residues 165–184 (PPIPDLRFQQSYLQSIQRAN) are involved in MIM complex binding. Required for normal vegetative cell population growth but is dispensable for mitophagy. Residues 199 to 215 (VLYPFLSGGMWVFVRHI) traverse the membrane as a helical segment. Residues 216 to 244 (FQFLKLQEKGFHFGQSLRRNLGLFSTFKD) lie on the Mitochondrial intermembrane side of the membrane.

Interacts (via N-terminal atg8 interacting motif) with atg8; the interaction is direct. Interacts with the mitochondrial outer import machinery (MIM) complex subunits mim1 and mim2.

It localises to the mitochondrion outer membrane. Functionally, mitophagy receptor that tethers atg8 to the mitochondrial outer membrane to promote selective autophagy. The sequence is that of Mitophagy receptor atg43 from Schizosaccharomyces pombe (strain 972 / ATCC 24843) (Fission yeast).